Consider the following 467-residue polypeptide: Venom prothrombin activator omicarin-C catalytic subunit (467 aa).

Residues 1–20 (MAPQLLLCLILTFLWSLPEA) form the signal peptide. Positions 21–40 (ESNVFLKSKVANRFLQRTKR) are excised as a propeptide. Residues 41 to 86 (ANSLFEEFRSGNIERECIEERCSKEEAREVFEDDEKTETFWNVYVD) enclose the Gla domain. 4-carboxyglutamate is present on residues glutamate 46, glutamate 47, glutamate 54, glutamate 56, glutamate 59, glutamate 60, glutamate 65, glutamate 66, glutamate 69, glutamate 72, and glutamate 75. Residues cysteine 57 and cysteine 62 are joined by a disulfide bond. One can recognise an EGF-like 1; calcium-binding domain in the interval 86-122 (DGDQCSSNPCHYRGTCKDGIGSYTCTCLFGYEGKNCE). 11 disulfides stabilise this stretch: cysteine 90–cysteine 101, cysteine 95–cysteine 110, cysteine 112–cysteine 121, cysteine 129–cysteine 140, cysteine 136–cysteine 149, cysteine 151–cysteine 164, cysteine 172–cysteine 329, cysteine 216–cysteine 221, cysteine 236–cysteine 252, cysteine 377–cysteine 391, and cysteine 402–cysteine 430. Serine 92 is a glycosylation site (O-linked (Hex...) serine). One can recognise an EGF-like 2 domain in the interval 129-164 (CRVDNGNCWHFCKPVQNDIQCSCAEGYLLGEDGHSC). The propeptide at 182–209 (REASLPDFVQSQNATLLKKSDNPSPDIR) is activation peptide. The Peptidase S1 domain maps to 210–454 (IVNGMDCKLG…FILWIKRIMR (245 aa)). The Charge relay system role is filled by histidine 251. An N-linked (GlcNAc...) asparagine glycan is attached at asparagine 254. Catalysis depends on aspartate 309, which acts as the Charge relay system. Serine 406 (charge relay system) is an active-site residue.

The protein belongs to the peptidase S1 family. Snake venom subfamily. Heterodimer of a light and a heavy chains; disulfide-linked. Is associated with omicarin-C non-catalytic subunit (AC Q58L90) in a non-covalent manner. Post-translationally, gamma-carboxyglutamate residues are formed by vitamin K dependent carboxylation. These residues are essential for the binding of calcium. As to expression, expressed by the venom gland.

Its subcellular location is the secreted. It catalyses the reaction Selective cleavage of Arg-|-Thr and then Arg-|-Ile bonds in prothrombin to form thrombin.. With respect to regulation, activated by calcium and negatively charged phospholipids. Functionally, snake prothrombin activator that attacks the hemostatic system of prey. This catalytic subunit is functionally similar to blood coagulation factor Xa. It requires a non-catalytic subunit present in the venom, which is similar to coagulation factor Va, to be fully active. This Oxyuranus microlepidotus (Inland taipan) protein is Venom prothrombin activator omicarin-C catalytic subunit.